A 189-amino-acid chain; its full sequence is Xanthine phosphoribosyltransferase (189 aa).

2 residues coordinate xanthine: Leu20 and Asn27. Residue 128–132 (ANGEA) participates in 5-phospho-alpha-D-ribose 1-diphosphate binding. Position 156 (Lys156) interacts with xanthine.

This sequence belongs to the purine/pyrimidine phosphoribosyltransferase family. Xpt subfamily. Homodimer.

Its subcellular location is the cytoplasm. The enzyme catalyses XMP + diphosphate = xanthine + 5-phospho-alpha-D-ribose 1-diphosphate. It functions in the pathway purine metabolism; XMP biosynthesis via salvage pathway; XMP from xanthine: step 1/1. Its function is as follows. Converts the preformed base xanthine, a product of nucleic acid breakdown, to xanthosine 5'-monophosphate (XMP), so it can be reused for RNA or DNA synthesis. This is Xanthine phosphoribosyltransferase from Clostridium acetobutylicum (strain ATCC 824 / DSM 792 / JCM 1419 / IAM 19013 / LMG 5710 / NBRC 13948 / NRRL B-527 / VKM B-1787 / 2291 / W).